The primary structure comprises 59 residues: Large ribosomal subunit protein bL32 (59 aa).

It belongs to the bacterial ribosomal protein bL32 family.

The polypeptide is Large ribosomal subunit protein bL32 (Synechococcus sp. (strain JA-2-3B'a(2-13)) (Cyanobacteria bacterium Yellowstone B-Prime)).